Reading from the N-terminus, the 801-residue chain is LPS-assembly protein LptD (801 aa).

An N-terminal signal peptide occupies residues 1–23 (MARLFSLKPLVLALGFCFGTHCA).

This sequence belongs to the LptD family. In terms of assembly, component of the lipopolysaccharide transport and assembly complex. Interacts with LptE and LptA.

The protein resides in the cell outer membrane. Together with LptE, is involved in the assembly of lipopolysaccharide (LPS) at the surface of the outer membrane. The chain is LPS-assembly protein LptD from Neisseria gonorrhoeae (strain ATCC 700825 / FA 1090).